We begin with the raw amino-acid sequence, 128 residues long: Fluoride-specific ion channel FluC (128 aa).

Helical transmembrane passes span 7 to 29 (LNFIAIGIGATLGAWLRWVLGLR), 36 to 57 (PWGTLTANLVGGYLIGVMVALI), 65 to 94 (AWIRLAAVTGFLGGLTTFSTFSAETVDMLE), and 98 to 126 (YATAAAYAGASLAGSLAMTGLGLATVRLL). N43 is a binding site for fluoride. Na(+)-binding residues include G77 and T80. Residues Y104, S108, and S112 each coordinate fluoride.

The protein belongs to the fluoride channel Fluc/FEX (TC 1.A.43) family. As to quaternary structure, homodimer.

It is found in the cell inner membrane. It catalyses the reaction fluoride(in) = fluoride(out). Na(+) is not transported, but it plays an essential structural role and its presence is essential for fluoride channel function. The Na(+)-binding site is specific for Na(+) over most other cations including K(+) and Mg(2+). Fluoride efflux is inhibited by Li(2+). Functionally, fluoride-specific ion channel. Important for reducing fluoride concentration in the cell, thus reducing its toxicity. Is highly specific for fluoride ions and cannot transport chloride ions. The polypeptide is Fluoride-specific ion channel FluC (Bordetella pertussis (strain Tohama I / ATCC BAA-589 / NCTC 13251)).